We begin with the raw amino-acid sequence, 488 residues long: ATP synthase subunit beta (488 aa).

164-171 (GGAGVGKT) serves as a coordination point for ATP.

It belongs to the ATPase alpha/beta chains family. In terms of assembly, F-type ATPases have 2 components, CF(1) - the catalytic core - and CF(0) - the membrane proton channel. CF(1) has five subunits: alpha(3), beta(3), gamma(1), delta(1), epsilon(1). CF(0) has four main subunits: a(1), b(1), b'(1) and c(9-12).

The protein localises to the cellular thylakoid membrane. The enzyme catalyses ATP + H2O + 4 H(+)(in) = ADP + phosphate + 5 H(+)(out). Functionally, produces ATP from ADP in the presence of a proton gradient across the membrane. The catalytic sites are hosted primarily by the beta subunits. This Prochlorococcus marinus (strain MIT 9313) protein is ATP synthase subunit beta.